The sequence spans 93 residues: Small ribosomal subunit protein uS19 (93 aa).

The protein belongs to the universal ribosomal protein uS19 family.

Protein S19 forms a complex with S13 that binds strongly to the 16S ribosomal RNA. This chain is Small ribosomal subunit protein uS19, found in Geobacter metallireducens (strain ATCC 53774 / DSM 7210 / GS-15).